We begin with the raw amino-acid sequence, 648 residues long: Macrolide export ATP-binding/permease protein MacB (648 aa).

An ABC transporter domain is found at 5 to 243 (LELKDIRRSY…TGGTEPVVNT (239 aa)). 41-48 (GASGSGKS) contacts ATP. Helical transmembrane passes span 273-293 (LLTMLGIIIGIASVVSIVVVG), 523-543 (LFLTLVAVISLVVGGIGVMNI), 576-596 (AVLVCLVGGALGITLSLLIAF), and 611-631 (PLALLLAFLCSTVTGILFGWL).

Belongs to the ABC transporter superfamily. Macrolide exporter (TC 3.A.1.122) family. In terms of assembly, homodimer. Part of the tripartite efflux system MacAB-TolC, which is composed of an inner membrane transporter, MacB, a periplasmic membrane fusion protein, MacA, and an outer membrane component, TolC. The complex forms a large protein conduit and can translocate molecules across both the inner and outer membranes. Interacts with MacA.

It is found in the cell inner membrane. Part of the tripartite efflux system MacAB-TolC. MacB is a non-canonical ABC transporter that contains transmembrane domains (TMD), which form a pore in the inner membrane, and an ATP-binding domain (NBD), which is responsible for energy generation. Confers resistance against macrolides. The protein is Macrolide export ATP-binding/permease protein MacB of Escherichia coli O6:K15:H31 (strain 536 / UPEC).